The primary structure comprises 66 residues: SPbeta prophage-derived uncharacterized protein YosK (66 aa).

The sequence is that of SPbeta prophage-derived uncharacterized protein YosK (yosK) from Bacillus subtilis (strain 168).